We begin with the raw amino-acid sequence, 247 residues long: MSHRDTLFSAPIARLGDWTFDERVAEVFPDMIQRSVPGYSNIISMISMLAERFVQPGTQVYDLGCSLGAATLSVRRNIHHDNCKIIAIDNSPAMIERCRRHIDAYKAPTPVDVIEGDIRDIAIENASMVVLNFTLQFLEPSERQALLDKIYQGLNPGGALVLSEKFSFEDAKVGELLFNMHHDFKRANGYSELEISQKRSMLENVMLTDSVETHKARLHKAGFEHSELWFQCFNFGSLVALKAEDAA.

Residues Y39, 64–66, 89–90, 117–118, N132, and R199 each bind S-adenosyl-L-methionine; these read GCS, DN, and DI.

The protein belongs to the class I-like SAM-binding methyltransferase superfamily. Cx-SAM synthase family. As to quaternary structure, homodimer.

The enzyme catalyses prephenate + S-adenosyl-L-methionine = carboxy-S-adenosyl-L-methionine + 3-phenylpyruvate + H2O. Functionally, catalyzes the conversion of S-adenosyl-L-methionine (SAM) to carboxy-S-adenosyl-L-methionine (Cx-SAM). This is Carboxy-S-adenosyl-L-methionine synthase from Shigella boydii serotype 4 (strain Sb227).